We begin with the raw amino-acid sequence, 235 residues long: Aspartate/glutamate leucyltransferase (235 aa).

Belongs to the R-transferase family. Bpt subfamily.

The protein resides in the cytoplasm. The catalysed reaction is N-terminal L-glutamyl-[protein] + L-leucyl-tRNA(Leu) = N-terminal L-leucyl-L-glutamyl-[protein] + tRNA(Leu) + H(+). It carries out the reaction N-terminal L-aspartyl-[protein] + L-leucyl-tRNA(Leu) = N-terminal L-leucyl-L-aspartyl-[protein] + tRNA(Leu) + H(+). Its function is as follows. Functions in the N-end rule pathway of protein degradation where it conjugates Leu from its aminoacyl-tRNA to the N-termini of proteins containing an N-terminal aspartate or glutamate. The sequence is that of Aspartate/glutamate leucyltransferase from Pseudomonas putida (strain W619).